The chain runs to 199 residues: MAAVTTDLIRELRERTSAGMMDCKKALEENNADIEKAITWLREKGIAKAAKKAGRETKEGRVVSYIHGNGKIGVLVELNSETDFVSKNEDFEALGKEICMQIAAMNPLYLNEESIPAADLEKEKTIMRSQLEAEGKKADQIEKILPGKIKKYISEVCLVNQAFFKDDSKTIDDLVKEAIAKFGENITIARFIRFQVGGL.

The segment at 82 to 85 is involved in Mg(2+) ion dislocation from EF-Tu; it reads TDFV.

It belongs to the EF-Ts family.

Its subcellular location is the cytoplasm. Functionally, associates with the EF-Tu.GDP complex and induces the exchange of GDP to GTP. It remains bound to the aminoacyl-tRNA.EF-Tu.GTP complex up to the GTP hydrolysis stage on the ribosome. The sequence is that of Elongation factor Ts from Leptospira interrogans serogroup Icterohaemorrhagiae serovar copenhageni (strain Fiocruz L1-130).